Here is a 336-residue protein sequence, read N- to C-terminus: tRNA N6-adenosine threonylcarbamoyltransferase (336 aa).

Positions 114 and 118 each coordinate Fe cation. Substrate contacts are provided by residues 136–140, aspartate 169, glycine 182, aspartate 186, and asparagine 275; that span reads LVSGG. Aspartate 301 is a Fe cation binding site.

The protein belongs to the KAE1 / TsaD family. The cofactor is Fe(2+).

It localises to the cytoplasm. The catalysed reaction is L-threonylcarbamoyladenylate + adenosine(37) in tRNA = N(6)-L-threonylcarbamoyladenosine(37) in tRNA + AMP + H(+). Its function is as follows. Required for the formation of a threonylcarbamoyl group on adenosine at position 37 (t(6)A37) in tRNAs that read codons beginning with adenine. Is involved in the transfer of the threonylcarbamoyl moiety of threonylcarbamoyl-AMP (TC-AMP) to the N6 group of A37, together with TsaE and TsaB. TsaD likely plays a direct catalytic role in this reaction. The polypeptide is tRNA N6-adenosine threonylcarbamoyltransferase (Streptococcus pneumoniae (strain ATCC 700669 / Spain 23F-1)).